Consider the following 178-residue polypeptide: MRTLALSLALALLCLLHTEAAATVPDRSEVAGKWYIVALASNTDFFLREKGKMKMVMARISFLGEDELEVSYAAPSPKGCRKWETTFKKTSDDGELYYSEEAEKTVEVLDTDYKSYAVIFATRVKDGRTLHMMRLYSRSREVSPTAMAIFRKLARERNYTDEMVAVLPSQEECSVDEV.

An N-terminal signal peptide occupies residues 1 to 20 (MRTLALSLALALLCLLHTEA). Ala21 carries the blocked amino end (Ala) modification. Thr43 contacts enterobactin. Residues Tyr72 and Lys104 each contribute to the 1-tetradecanoyl-sn-glycerol 3-phosphate site. A disulfide bond links Cys80 and Cys173. Lys104, Arg123, and Arg134 together coordinate enterobactin. 134–136 (RLY) provides a ligand contact to 1-tetradecanoyl-sn-glycerol 3-phosphate.

It belongs to the calycin superfamily. Lipocalin family. Monomer. In terms of processing, does not seem to be glycosylated. As to expression, expressed in egg white (at protein level). Expressed in the magnum of the oviduct (at protein level). Preferentially synthesized in nonproliferating cells.

Its subcellular location is the secreted. Its function is as follows. Siderocalin-like lipocalin tightly binding a variety of bacterial ferric siderophores, also binds long-chain unsaturated fatty acids such as linoleic acid, oleic acid, arachidonic acid and, with a lower affinity, long chain saturated fatty acids such as steraic acid. May act as an antibacterial factor, through dual ligand specificity, both as a siderophore-sequestrating molecule and a lysophosphatidic acid (LPA) sensor. This is Extracellular fatty acid-binding protein (EXFABP) from Gallus gallus (Chicken).